The following is a 228-amino-acid chain: Protein-L-isoaspartate O-methyltransferase (228 aa).

Residue Ser74 is part of the active site.

Belongs to the methyltransferase superfamily. L-isoaspartyl/D-aspartyl protein methyltransferase family.

Its subcellular location is the cytoplasm. The enzyme catalyses [protein]-L-isoaspartate + S-adenosyl-L-methionine = [protein]-L-isoaspartate alpha-methyl ester + S-adenosyl-L-homocysteine. Its function is as follows. Catalyzes the methyl esterification of L-isoaspartyl residues in peptides and proteins that result from spontaneous decomposition of normal L-aspartyl and L-asparaginyl residues. It plays a role in the repair and/or degradation of damaged proteins. This chain is Protein-L-isoaspartate O-methyltransferase, found in Methylorubrum extorquens (strain PA1) (Methylobacterium extorquens).